Reading from the N-terminus, the 794-residue chain is Protein transport protein SEC23 G (794 aa).

Zn(2+) contacts are provided by cysteine 56, cysteine 59, cysteine 78, and cysteine 81. The tract at residues cysteine 56–cysteine 81 is zinc finger-like.

The protein belongs to the SEC23/SEC24 family. SEC23 subfamily. As to quaternary structure, component of the coat protein complex II (COPII), composed of at least five proteins: the Sec23/24 complex, the Sec13/31 complex and Sar1. Interacts with SEC24A.

It is found in the cytoplasmic vesicle. Its subcellular location is the COPII-coated vesicle membrane. The protein resides in the endoplasmic reticulum membrane. The protein localises to the membrane. Functionally, component of the coat protein complex II (COPII) which promotes the formation of transport vesicles from the endoplasmic reticulum (ER). The coat has two main functions, the physical deformation of the endoplasmic reticulum membrane into vesicles and the selection of cargo molecules. The polypeptide is Protein transport protein SEC23 G (Arabidopsis thaliana (Mouse-ear cress)).